We begin with the raw amino-acid sequence, 428 residues long: Adenylosuccinate synthetase (428 aa).

GTP is bound by residues G12–K18 and G40–T42. D13 acts as the Proton acceptor in catalysis. Positions 13 and 40 each coordinate Mg(2+). IMP-binding positions include D13–K16, N38–H41, T128, R142, Q223, T238, and R302. H41 (proton donor) is an active-site residue. T298–R304 contributes to the substrate binding site. Residues R304, S330–D332, and S412–G414 each bind GTP.

The protein belongs to the adenylosuccinate synthetase family. As to quaternary structure, homodimer. Mg(2+) serves as cofactor.

It localises to the cytoplasm. The catalysed reaction is IMP + L-aspartate + GTP = N(6)-(1,2-dicarboxyethyl)-AMP + GDP + phosphate + 2 H(+). It functions in the pathway purine metabolism; AMP biosynthesis via de novo pathway; AMP from IMP: step 1/2. In terms of biological role, plays an important role in the de novo pathway of purine nucleotide biosynthesis. Catalyzes the first committed step in the biosynthesis of AMP from IMP. This is Adenylosuccinate synthetase from Streptococcus pneumoniae serotype 2 (strain D39 / NCTC 7466).